Reading from the N-terminus, the 210-residue chain is Large ribosomal subunit protein uL3 (210 aa).

This sequence belongs to the universal ribosomal protein uL3 family. In terms of assembly, part of the 50S ribosomal subunit. Forms a cluster with proteins L14 and L19.

Its function is as follows. One of the primary rRNA binding proteins, it binds directly near the 3'-end of the 23S rRNA, where it nucleates assembly of the 50S subunit. The chain is Large ribosomal subunit protein uL3 from Amoebophilus asiaticus (strain 5a2).